The chain runs to 833 residues: cGMP-specific 3',5'-cyclic phosphodiesterase (833 aa).

Phosphoserine is present on S60. Positions 82-101 are disordered; that stretch reads FLSDSGKKEQMPLTSPRFDS. 2 consecutive GAF domains span residues 122 to 272 and 304 to 461; these read DVTA…GIVL and SLEV…GLGI. A PDEase domain is found at 494-818; that stretch reads ETRELQALAA…QKWQALADQQ (325 aa). H571 serves as the catalytic Proton donor. Residues H575, H611, D612, and D722 each coordinate Zn(2+). Position 612 (D612) interacts with Mg(2+). 3',5'-cyclic GMP is bound at residue Q775.

Belongs to the cyclic nucleotide phosphodiesterase family. The cofactor is Zn(2+). Requires Mg(2+) as cofactor. Post-translationally, phosphorylation is regulated by binding of cGMP to the two allosteric sites. Phosphorylation by PRKG1 leads to its activation.

It catalyses the reaction 3',5'-cyclic GMP + H2O = GMP + H(+). It functions in the pathway purine metabolism; 3',5'-cyclic GMP degradation; GMP from 3',5'-cyclic GMP: step 1/1. In terms of biological role, plays a role in signal transduction by regulating the intracellular concentration of cyclic nucleotides. This phosphodiesterase catalyzes the specific hydrolysis of cGMP to 5'-GMP. Specifically regulates nitric-oxide-generated cGMP. The chain is cGMP-specific 3',5'-cyclic phosphodiesterase (Pde5a) from Rattus norvegicus (Rat).